We begin with the raw amino-acid sequence, 301 residues long: Lipoyl synthase (301 aa).

[4Fe-4S] cluster contacts are provided by C37, C42, C48, C63, C67, C70, and S276. The region spanning 49–265 (WSKKHATVMI…ERIARTKGFL (217 aa)) is the Radical SAM core domain.

The protein belongs to the radical SAM superfamily. Lipoyl synthase family. [4Fe-4S] cluster is required as a cofactor.

It is found in the cytoplasm. It catalyses the reaction [[Fe-S] cluster scaffold protein carrying a second [4Fe-4S](2+) cluster] + N(6)-octanoyl-L-lysyl-[protein] + 2 oxidized [2Fe-2S]-[ferredoxin] + 2 S-adenosyl-L-methionine + 4 H(+) = [[Fe-S] cluster scaffold protein] + N(6)-[(R)-dihydrolipoyl]-L-lysyl-[protein] + 4 Fe(3+) + 2 hydrogen sulfide + 2 5'-deoxyadenosine + 2 L-methionine + 2 reduced [2Fe-2S]-[ferredoxin]. The protein operates within protein modification; protein lipoylation via endogenous pathway; protein N(6)-(lipoyl)lysine from octanoyl-[acyl-carrier-protein]: step 2/2. In terms of biological role, catalyzes the radical-mediated insertion of two sulfur atoms into the C-6 and C-8 positions of the octanoyl moiety bound to the lipoyl domains of lipoate-dependent enzymes, thereby converting the octanoylated domains into lipoylated derivatives. This Rickettsia felis (strain ATCC VR-1525 / URRWXCal2) (Rickettsia azadi) protein is Lipoyl synthase.